A 474-amino-acid polypeptide reads, in one-letter code: Probable glycine dehydrogenase (decarboxylating) subunit 2 (474 aa).

Lys266 is modified (N6-(pyridoxal phosphate)lysine).

The protein belongs to the GcvP family. C-terminal subunit subfamily. In terms of assembly, the glycine cleavage system is composed of four proteins: P, T, L and H. In this organism, the P 'protein' is a heterodimer of two subunits. Requires pyridoxal 5'-phosphate as cofactor.

It catalyses the reaction N(6)-[(R)-lipoyl]-L-lysyl-[glycine-cleavage complex H protein] + glycine + H(+) = N(6)-[(R)-S(8)-aminomethyldihydrolipoyl]-L-lysyl-[glycine-cleavage complex H protein] + CO2. Its function is as follows. The glycine cleavage system catalyzes the degradation of glycine. The P protein binds the alpha-amino group of glycine through its pyridoxal phosphate cofactor; CO(2) is released and the remaining methylamine moiety is then transferred to the lipoamide cofactor of the H protein. The chain is Probable glycine dehydrogenase (decarboxylating) subunit 2 from Thermus thermophilus (strain ATCC 27634 / DSM 579 / HB8).